Consider the following 214-residue polypeptide: Ribosomal RNA small subunit methyltransferase G (214 aa).

S-adenosyl-L-methionine-binding positions include Gly77, Leu82, 128 to 129 (VE), and Arg143.

This sequence belongs to the methyltransferase superfamily. RNA methyltransferase RsmG family.

Its subcellular location is the cytoplasm. It catalyses the reaction guanosine(527) in 16S rRNA + S-adenosyl-L-methionine = N(7)-methylguanosine(527) in 16S rRNA + S-adenosyl-L-homocysteine. Specifically methylates the N7 position of guanine in position 527 of 16S rRNA. This chain is Ribosomal RNA small subunit methyltransferase G, found in Nitrosococcus oceani (strain ATCC 19707 / BCRC 17464 / JCM 30415 / NCIMB 11848 / C-107).